Here is a 274-residue protein sequence, read N- to C-terminus: Probable starch degradation products transport system permease protein AmyC (274 aa).

The next 6 membrane-spanning stretches (helical) occupy residues 11-31 (LTFL…IILV), 73-93 (LIIT…TAYA), 103-123 (VIIY…VMIP), 139-159 (LVFM…YGAL), 184-204 (IILP…IMWI), and 238-258 (WNLG…FYFL). The ABC transmembrane type-1 domain occupies 69–259 (FSNTLIITVF…LPVVIFYFLA (191 aa)).

This sequence belongs to the binding-protein-dependent transport system permease family. MalFG subfamily.

The protein localises to the cell membrane. Functionally, probably part of a binding-protein-dependent transport system starch degradation products. Probably responsible for the translocation of the substrate across the membrane. The chain is Probable starch degradation products transport system permease protein AmyC (amyC) from Thermoanaerobacterium thermosulfurigenes (Clostridium thermosulfurogenes).